The chain runs to 201 residues: Ras-related protein Rab-9B (201 aa).

Residues valine 18, glycine 19, lysine 20, serine 21, serine 22, aspartate 33, serine 34, alanine 36, histidine 38, and threonine 39 each coordinate GTP. Position 21 (serine 21) interacts with Mg(2+). The short motif at 31–42 (KFDSQAFHTIGV) is the Switch 1 element. Position 34 is a phosphoserine (serine 34). Mg(2+) contacts are provided by threonine 39 and aspartate 62. A Switch 2 motif is present at residues 64–78 (AGQERFKSLRTPFYR). Positions 65, 124, 125, 155, and 156 each coordinate GTP. Residues cysteine 200 and cysteine 201 are each lipidated (S-geranylgeranyl cysteine).

This sequence belongs to the small GTPase superfamily. Rab family. As to quaternary structure, interacts (GTP-bound form) with SGSM1; the GDP-bound form has much lower affinity for SGSM1. The GTP-bound form but not the GDP-bound form interacts with HPS4 and the BLOC-3 complex (heterodimer of HPS1 and HPS4) but does not interact with HPS1 alone. Interacts (GTP-bound form) with NDE1. Mg(2+) serves as cofactor.

Its subcellular location is the cell membrane. It is found in the cytoplasmic vesicle. It localises to the phagosome membrane. It catalyses the reaction GTP + H2O = GDP + phosphate + H(+). Its activity is regulated as follows. Regulated by guanine nucleotide exchange factors (GEFs) which promote the exchange of bound GDP for free GTP. Regulated by GTPase activating proteins (GAPs) which increase the GTP hydrolysis activity. Inhibited by GDP dissociation inhibitors (GDIs). Its function is as follows. The small GTPases Rab are key regulators of intracellular membrane trafficking, from the formation of transport vesicles to their fusion with membranes. Rabs cycle between an inactive GDP-bound form and an active GTP-bound form that is able to recruit to membranes different sets of downstream effectors directly responsible for vesicle formation, movement, tethering and fusion. RAB9B is involved in the transport of proteins between the endosomes and the trans Golgi network. May use NDE1/NDEL1 as an effector to interact with the dynein motor complex in order to control retrograde trafficking of RAB9-associated late endosomes to the TGN. This Mus musculus (Mouse) protein is Ras-related protein Rab-9B.